Consider the following 484-residue polypeptide: Probable chitinase 2 (484 aa).

A signal peptide spans 1–33 (MTLRSRLSGEAPQLWLLLLLASTASSLWASVAA). One can recognise a GH18 domain in the interval 41–432 (KVVVCYVSTW…RTINEATMLA (392 aa)). A disulfide bridge links cysteine 45 with cysteine 70. Residues 98 to 99 (EE) and 125 to 128 (GGWN) contribute to the chitin site. Glutamate 168 acts as the Proton donor in catalysis. Residues tyrosine 169, 231–234 (MCYD), and tryptophan 384 each bind chitin. The residue at position 467 (serine 467) is a Phosphoserine.

It belongs to the glycosyl hydrolase 18 family. Chitinase class II subfamily.

It catalyses the reaction Random endo-hydrolysis of N-acetyl-beta-D-glucosaminide (1-&gt;4)-beta-linkages in chitin and chitodextrins.. The chain is Probable chitinase 2 from Drosophila melanogaster (Fruit fly).